A 142-amino-acid chain; its full sequence is Large ribosomal subunit protein uL11 (142 aa).

The protein belongs to the universal ribosomal protein uL11 family. As to quaternary structure, part of the ribosomal stalk of the 50S ribosomal subunit. Interacts with L10 and the large rRNA to form the base of the stalk. L10 forms an elongated spine to which L12 dimers bind in a sequential fashion forming a multimeric L10(L12)X complex. One or more lysine residues are methylated.

Functionally, forms part of the ribosomal stalk which helps the ribosome interact with GTP-bound translation factors. The chain is Large ribosomal subunit protein uL11 from Baumannia cicadellinicola subsp. Homalodisca coagulata.